The sequence spans 446 residues: WD repeat domain phosphoinositide-interacting protein 1 (446 aa).

A Nuclear receptor interaction motif is present at residues 131–136; sequence LLKTVL. The stretch at 184–224 is one WD 1 repeat; that stretch reads AHEGTLAAITFNSSGSKLASASEKGTVIRVFSVPEGQKLYE. The short motif at 225-228 is the L/FRRG motif element; sequence FRRG. WD repeat units follow at residues 230–269 and 312–351; these read KRYV…DSRP and SGQK…GGEC. The disordered stretch occupies residues 386–406; it reads ARPSTSAASTVPGYSEDGGAL.

It belongs to the WD repeat PROPPIN family. In terms of assembly, interacts with androgen receptor (AR) and the estrogen receptors ESR1 and ESR2. Interacts with WIPI2. Interacts with WDR45. Interacts with ATG16L1. May interact with NUDC.

The protein localises to the golgi apparatus. It is found in the trans-Golgi network. Its subcellular location is the endosome. The protein resides in the cytoplasmic vesicle. It localises to the clathrin-coated vesicle. The protein localises to the preautophagosomal structure membrane. It is found in the cytoplasm. Its subcellular location is the cytoskeleton. Component of the autophagy machinery that controls the major intracellular degradation process by which cytoplasmic materials are packaged into autophagosomes and delivered to lysosomes for degradation. Plays an important role in starvation- and calcium-mediated autophagy, as well as in mitophagy. Functions downstream of the ULK1 and PI3-kinases that produce phosphatidylinositol 3-phosphate (PtdIns3P) on membranes of the endoplasmic reticulum once activated. Binds phosphatidylinositol 3-phosphate (PtdIns3P), and maybe other phosphoinositides including PtdIns3,5P2 and PtdIns5P, and is recruited to phagophore assembly sites at the endoplasmic reticulum membranes. There, it assists WIPI2 in the recruitment of ATG12-ATG5-ATG16L1, a complex that directly controls the elongation of the nascent autophagosomal membrane. Together with WDR45/WIPI4, promotes ATG2 (ATG2A or ATG2B)-mediated lipid transfer by enhancing ATG2-association with phosphatidylinositol 3-monophosphate (PI3P)-containing membranes. Involved in xenophagy of Staphylococcus aureus. Invading S.aureus cells become entrapped in autophagosome-like WIPI1 positive vesicles targeted for lysosomal degradation. Also plays a distinct role in controlling the transcription of melanogenic enzymes and melanosome maturation, a process that is distinct from starvation-induced autophagy. May also regulate the trafficking of proteins involved in the mannose-6-phosphate receptor (MPR) recycling pathway. The polypeptide is WD repeat domain phosphoinositide-interacting protein 1 (Wipi1) (Mus musculus (Mouse)).